The primary structure comprises 1371 residues: DNA-directed RNA polymerase subunit beta (1371 aa).

The protein belongs to the RNA polymerase beta chain family. In terms of assembly, the RNAP catalytic core consists of 2 alpha, 1 beta, 1 beta' and 1 omega subunit. When a sigma factor is associated with the core the holoenzyme is formed, which can initiate transcription.

The enzyme catalyses RNA(n) + a ribonucleoside 5'-triphosphate = RNA(n+1) + diphosphate. DNA-dependent RNA polymerase catalyzes the transcription of DNA into RNA using the four ribonucleoside triphosphates as substrates. In Citrifermentans bemidjiense (strain ATCC BAA-1014 / DSM 16622 / JCM 12645 / Bem) (Geobacter bemidjiensis), this protein is DNA-directed RNA polymerase subunit beta.